Consider the following 469-residue polypeptide: Trigger factor (469 aa).

Residues 162–243 (GDFVSIDLSA…VKSVKERELP (82 aa)) form the PPIase FKBP-type domain. The segment at 429-469 (NTIDTSEFFGKHAQSDKADQKTEEADPNSDAIDEEVDEAAE) is disordered. Basic and acidic residues predominate over residues 437-452 (FGKHAQSDKADQKTEE). The segment covering 453–469 (ADPNSDAIDEEVDEAAE) has biased composition (acidic residues).

This sequence belongs to the FKBP-type PPIase family. Tig subfamily.

Its subcellular location is the cytoplasm. It carries out the reaction [protein]-peptidylproline (omega=180) = [protein]-peptidylproline (omega=0). Functionally, involved in protein export. Acts as a chaperone by maintaining the newly synthesized protein in an open conformation. Functions as a peptidyl-prolyl cis-trans isomerase. The polypeptide is Trigger factor (Mycobacterium leprae (strain Br4923)).